Here is a 988-residue protein sequence, read N- to C-terminus: Fanconi-associated nuclease 1 (988 aa).

The interval 1-39 (MESQTGRKSARRLSMTKKKSQSVCPIKERTSNGGAASIT) is disordered. The segment covering 8 to 20 (KSARRLSMTKKKS) has biased composition (basic residues). Residues 49 to 77 (KLACPLCGKLVPRYKINEHIDSQCQNFLV) form a UBZ4-type zinc finger. Cysteine 52, cysteine 55, histidine 67, and cysteine 72 together coordinate Zn(2+). Disordered stretches follow at residues 87-115 (TKAP…TSPF), 164-256 (TRVS…NTTE), and 269-307 (SSIE…TTQE). Positions 89–98 (APSNSALASN) are enriched in polar residues. Basic and acidic residues-rich tracts occupy residues 99–111 (NERE…KDAD) and 167–182 (SDNE…RSQK). A compositionally biased stretch (polar residues) spans 183-195 (ENCMNSLTFGSER). Over residues 224–238 (SDSSISSDVHTSSSS) the composition is skewed to low complexity. Residues 272-283 (ERGDESKVKSDQ) show a composition bias toward basic and acidic residues. Over residues 284 to 303 (TEASSSAYDVPTSKSPIKSK) the composition is skewed to polar residues. A coiled-coil region spans residues 636–663 (SRGVEILQRLKRYEDAVEQLRNLLSQSV). The Mn(2+) site is built by glutamate 805, aspartate 931, glutamate 946, and valine 947. The 113-residue stretch at 866 to 978 (VETLQDLIAD…GADVEVCHVT (113 aa)) folds into the VRR-NUC domain.

This sequence belongs to the FAN1 family. As to quaternary structure, interacts with fancd2 (when monoubiquitinated). Requires Mn(2+) as cofactor. The cofactor is Mg(2+).

It is found in the nucleus. It carries out the reaction Hydrolytically removes 5'-nucleotides successively from the 3'-hydroxy termini of 3'-hydroxy-terminated oligonucleotides.. Its function is as follows. Nuclease required for the repair of DNA interstrand cross-links (ICL) recruited at sites of DNA damage by monoubiquitinated FANCD2. Specifically involved in repair of ICL-induced DNA breaks by being required for efficient homologous recombination, probably in the resolution of homologous recombination intermediates. Acts as a 5'-3' exonuclease that anchors at a cut end of DNA and cleaves DNA successively at every third nucleotide, allowing to excise an ICL from one strand through flanking incisions. Probably keeps excising with 3'-flap annealing until it reaches and unhooks the ICL. Acts at sites that have a 5'-terminal phosphate anchor at a nick or a 1- or 2-nucleotide flap and is augmented by a 3' flap. Also has endonuclease activity toward 5'-flaps. This is Fanconi-associated nuclease 1 (fan1) from Danio rerio (Zebrafish).